Reading from the N-terminus, the 230-residue chain is Sugar fermentation stimulation protein homolog (230 aa).

The protein belongs to the SfsA family.

The chain is Sugar fermentation stimulation protein homolog from Clostridium botulinum (strain Okra / Type B1).